The following is a 70-amino-acid chain: Large ribosomal subunit protein uL29 (70 aa).

The protein belongs to the universal ribosomal protein uL29 family.

This Symbiobacterium thermophilum (strain DSM 24528 / JCM 14929 / IAM 14863 / T) protein is Large ribosomal subunit protein uL29.